A 410-amino-acid chain; its full sequence is Putative ribonuclease E (410 aa).

Residues 39 to 119 form the S1 motif domain; sequence SNIYKGKIVR…GTKGALLTTF (81 aa). Positions 303 and 346 each coordinate Mg(2+).

The protein belongs to the RNase E/G family. RNase E subfamily. As to quaternary structure, component of the RNA degradosome, which is a multiprotein complex involved in RNA processing and mRNA degradation. Within the RNA degradosome, RNase E assembles into a homotetramer formed by a dimer of dimers. Mg(2+) serves as cofactor.

The protein localises to the cytoplasm. Its subcellular location is the cell inner membrane. It carries out the reaction Endonucleolytic cleavage of single-stranded RNA in A- and U-rich regions.. Endoribonuclease that plays a central role in RNA processing and decay. Required for the maturation of 5S and 16S rRNAs and the majority of tRNAs. Also involved in the degradation of most mRNAs. This is Putative ribonuclease E (rne) from Buchnera aphidicola subsp. Baizongia pistaciae (strain Bp).